We begin with the raw amino-acid sequence, 82 residues long: Small ribosomal subunit protein bS16 (82 aa).

Belongs to the bacterial ribosomal protein bS16 family.

This Actinobacillus succinogenes (strain ATCC 55618 / DSM 22257 / CCUG 43843 / 130Z) protein is Small ribosomal subunit protein bS16.